The chain runs to 474 residues: tRNA-2-methylthio-N(6)-dimethylallyladenosine synthase (474 aa).

Positions 3–120 (KKLHIKTWGC…LPEMINSVRG (118 aa)) constitute an MTTase N-terminal domain. Residues Cys-12, Cys-49, Cys-83, Cys-157, Cys-161, and Cys-164 each contribute to the [4Fe-4S] cluster site. In terms of domain architecture, Radical SAM core spans 143 to 375 (RAEGPTAFVS…QERINQQAMA (233 aa)). In terms of domain architecture, TRAM spans 378-441 (RRMLGTTQRI…PNSLRGKVVR (64 aa)).

The protein belongs to the methylthiotransferase family. MiaB subfamily. In terms of assembly, monomer. It depends on [4Fe-4S] cluster as a cofactor.

The protein localises to the cytoplasm. It carries out the reaction N(6)-dimethylallyladenosine(37) in tRNA + (sulfur carrier)-SH + AH2 + 2 S-adenosyl-L-methionine = 2-methylsulfanyl-N(6)-dimethylallyladenosine(37) in tRNA + (sulfur carrier)-H + 5'-deoxyadenosine + L-methionine + A + S-adenosyl-L-homocysteine + 2 H(+). Catalyzes the methylthiolation of N6-(dimethylallyl)adenosine (i(6)A), leading to the formation of 2-methylthio-N6-(dimethylallyl)adenosine (ms(2)i(6)A) at position 37 in tRNAs that read codons beginning with uridine. In Salmonella enteritidis PT4 (strain P125109), this protein is tRNA-2-methylthio-N(6)-dimethylallyladenosine synthase.